The sequence spans 198 residues: RNA-free ribonuclease P (198 aa).

The protein belongs to the HARP family.

It catalyses the reaction Endonucleolytic cleavage of RNA, removing 5'-extranucleotides from tRNA precursor.. RNA-free RNase P that catalyzes the removal of the 5'-leader sequence from pre-tRNA to produce the mature 5'-terminus. This Nitrosococcus oceani (strain ATCC 19707 / BCRC 17464 / JCM 30415 / NCIMB 11848 / C-107) protein is RNA-free ribonuclease P.